We begin with the raw amino-acid sequence, 42 residues long: Potassium channel toxin gamma-KTx 1.4 (42 aa).

Intrachain disulfides connect Cys-5/Cys-23, Cys-11/Cys-34, Cys-20/Cys-39, and Cys-24/Cys-41.

The protein belongs to the ergtoxin family. Gamma-KTx 1 subfamily. Expressed by the venom gland.

Its subcellular location is the secreted. Functionally, blocks Kv11/ERG potassium channels. The protein is Potassium channel toxin gamma-KTx 1.4 of Centruroides sculpturatus (Arizona bark scorpion).